The sequence spans 219 residues: uncharacterized protein (219 aa).

Residues 28–50 (IVSSLIAGGYALFVSAFTSYVYT) form a helical membrane-spanning segment. Positions 155–218 (EILRESLSEI…EEIEKELEFF (64 aa)) form a coiled coil.

It localises to the membrane. This is an uncharacterized protein from Aquifex aeolicus (strain VF5).